A 232-amino-acid polypeptide reads, in one-letter code: 5'-methylthioadenosine/S-adenosylhomocysteine nucleosidase (232 aa).

Glutamate 12 serves as the catalytic Proton acceptor. Substrate-binding positions include glycine 78, methionine 153, and 174–175; that span reads ME. Residue aspartate 198 is the Proton donor of the active site.

The protein belongs to the PNP/UDP phosphorylase family. MtnN subfamily.

The catalysed reaction is S-adenosyl-L-homocysteine + H2O = S-(5-deoxy-D-ribos-5-yl)-L-homocysteine + adenine. It carries out the reaction S-methyl-5'-thioadenosine + H2O = 5-(methylsulfanyl)-D-ribose + adenine. It catalyses the reaction 5'-deoxyadenosine + H2O = 5-deoxy-D-ribose + adenine. It functions in the pathway amino-acid biosynthesis; L-methionine biosynthesis via salvage pathway; S-methyl-5-thio-alpha-D-ribose 1-phosphate from S-methyl-5'-thioadenosine (hydrolase route): step 1/2. Catalyzes the irreversible cleavage of the glycosidic bond in both 5'-methylthioadenosine (MTA) and S-adenosylhomocysteine (SAH/AdoHcy) to adenine and the corresponding thioribose, 5'-methylthioribose and S-ribosylhomocysteine, respectively. Also cleaves 5'-deoxyadenosine, a toxic by-product of radical S-adenosylmethionine (SAM) enzymes, into 5-deoxyribose and adenine. The sequence is that of 5'-methylthioadenosine/S-adenosylhomocysteine nucleosidase from Anoxybacillus flavithermus (strain DSM 21510 / WK1).